The sequence spans 479 residues: UDP-N-acetylmuramate--L-alanine ligase (479 aa).

Residue 124–130 coordinates ATP; that stretch reads GSHGKTT.

It belongs to the MurCDEF family.

Its subcellular location is the cytoplasm. The enzyme catalyses UDP-N-acetyl-alpha-D-muramate + L-alanine + ATP = UDP-N-acetyl-alpha-D-muramoyl-L-alanine + ADP + phosphate + H(+). It functions in the pathway cell wall biogenesis; peptidoglycan biosynthesis. Cell wall formation. The chain is UDP-N-acetylmuramate--L-alanine ligase from Synechococcus sp. (strain RCC307).